The sequence spans 325 residues: ATP synthase gamma chain (325 aa).

The protein belongs to the ATPase gamma chain family. As to quaternary structure, F-type ATPases have 2 components, CF(1) - the catalytic core - and CF(0) - the membrane proton channel. CF(1) has five subunits: alpha(3), beta(3), gamma(1), delta(1), epsilon(1). CF(0) has three main subunits: a, b and c.

Its subcellular location is the cell membrane. Its function is as follows. Produces ATP from ADP in the presence of a proton gradient across the membrane. The gamma chain is believed to be important in regulating ATPase activity and the flow of protons through the CF(0) complex. The chain is ATP synthase gamma chain from Corynebacterium urealyticum (strain ATCC 43042 / DSM 7109).